A 203-amino-acid polypeptide reads, in one-letter code: Thymidylate kinase (203 aa).

10-17 provides a ligand contact to ATP; it reads GIDGAGKS.

The protein belongs to the thymidylate kinase family.

It carries out the reaction dTMP + ATP = dTDP + ADP. Functionally, phosphorylation of dTMP to form dTDP in both de novo and salvage pathways of dTTP synthesis. The polypeptide is Thymidylate kinase (Cupriavidus pinatubonensis (strain JMP 134 / LMG 1197) (Cupriavidus necator (strain JMP 134))).